The sequence spans 63 residues: UPF0370 protein ECA1289 (63 aa).

Residues 3–23 (WLADYWWIILIILIGMLINGI) traverse the membrane as a helical segment. The tract at residues 39-63 (PKLPPHRDNNDKWDNEEDDWPKKKP) is disordered.

It belongs to the UPF0370 family.

The protein localises to the cell membrane. In Pectobacterium atrosepticum (strain SCRI 1043 / ATCC BAA-672) (Erwinia carotovora subsp. atroseptica), this protein is UPF0370 protein ECA1289.